The sequence spans 63 residues: Mu-like prophage FluMu protein gp38 (63 aa).

This sequence to phage Mu protein gp38.

This is Mu-like prophage FluMu protein gp38 from Haemophilus influenzae (strain ATCC 51907 / DSM 11121 / KW20 / Rd).